The following is a 262-amino-acid chain: Hydroxyacylglutathione hydrolase (262 aa).

Zn(2+) is bound by residues His-53, His-55, Asp-57, His-58, His-111, Asp-128, and His-166.

This sequence belongs to the metallo-beta-lactamase superfamily. Glyoxalase II family. Monomer. It depends on Zn(2+) as a cofactor.

It catalyses the reaction an S-(2-hydroxyacyl)glutathione + H2O = a 2-hydroxy carboxylate + glutathione + H(+). The protein operates within secondary metabolite metabolism; methylglyoxal degradation; (R)-lactate from methylglyoxal: step 2/2. Its function is as follows. Thiolesterase that catalyzes the hydrolysis of S-D-lactoyl-glutathione to form glutathione and D-lactic acid. The sequence is that of Hydroxyacylglutathione hydrolase from Nitrosomonas europaea (strain ATCC 19718 / CIP 103999 / KCTC 2705 / NBRC 14298).